The primary structure comprises 852 residues: Bifunctional uridylyltransferase/uridylyl-removing enzyme (852 aa).

The uridylyltransferase stretch occupies residues 1 to 318 (MPANLSSALE…STPLRVTLRI (318 aa)). The interval 319–672 (DDDYIQVNNQ…SRILPKSDSF (354 aa)) is uridylyl-removing. The HD domain occupies 436–558 (VDDHILTVVR…VQTHERLSAL (123 aa)). ACT domains lie at 673 to 757 (QVMV…SRSR) and 785 to 852 (SVEI…EQLS).

It belongs to the GlnD family. The cofactor is Mg(2+).

It carries out the reaction [protein-PII]-L-tyrosine + UTP = [protein-PII]-uridylyl-L-tyrosine + diphosphate. It catalyses the reaction [protein-PII]-uridylyl-L-tyrosine + H2O = [protein-PII]-L-tyrosine + UMP + H(+). Uridylyltransferase (UTase) activity is inhibited by glutamine, while glutamine activates uridylyl-removing (UR) activity. Modifies, by uridylylation and deuridylylation, the PII regulatory proteins (GlnB and homologs), in response to the nitrogen status of the cell that GlnD senses through the glutamine level. Under low glutamine levels, catalyzes the conversion of the PII proteins and UTP to PII-UMP and PPi, while under higher glutamine levels, GlnD hydrolyzes PII-UMP to PII and UMP (deuridylylation). Thus, controls uridylylation state and activity of the PII proteins, and plays an important role in the regulation of nitrogen assimilation and metabolism. This is Bifunctional uridylyltransferase/uridylyl-removing enzyme from Neisseria meningitidis serogroup B (strain ATCC BAA-335 / MC58).